The following is a 136-amino-acid chain: Small ribosomal subunit protein uS8 (136 aa).

Belongs to the universal ribosomal protein uS8 family. As to quaternary structure, part of the 30S ribosomal subunit. Contacts proteins S5 and S12.

One of the primary rRNA binding proteins, it binds directly to 16S rRNA central domain where it helps coordinate assembly of the platform of the 30S subunit. The sequence is that of Small ribosomal subunit protein uS8 from Synechococcus sp. (strain JA-2-3B'a(2-13)) (Cyanobacteria bacterium Yellowstone B-Prime).